Reading from the N-terminus, the 207-residue chain is Small ribosomal subunit protein uS4 (207 aa).

A disordered region spans residues 33-54 (KLDSKPGQHGRTSGARTSDYGN). Residues 42–53 (GRTSGARTSDYG) show a composition bias toward polar residues. An S4 RNA-binding domain is found at 97–160 (SRLDNVVYRM…KKQVRIAEAL (64 aa)).

The protein belongs to the universal ribosomal protein uS4 family. In terms of assembly, part of the 30S ribosomal subunit. Contacts protein S5. The interaction surface between S4 and S5 is involved in control of translational fidelity.

One of the primary rRNA binding proteins, it binds directly to 16S rRNA where it nucleates assembly of the body of the 30S subunit. Functionally, with S5 and S12 plays an important role in translational accuracy. The chain is Small ribosomal subunit protein uS4 from Cupriavidus necator (strain ATCC 17699 / DSM 428 / KCTC 22496 / NCIMB 10442 / H16 / Stanier 337) (Ralstonia eutropha).